The primary structure comprises 455 residues: Tubby-like F-box protein 1 (455 aa).

In terms of domain architecture, F-box spans glutamate 54–isoleucine 112. A disordered region spans residues glutamine 386–lysine 414. Over residues glutamine 388–glutamine 402 the composition is skewed to pro residues.

This sequence belongs to the TUB family. As to expression, ubiquitous.

The sequence is that of Tubby-like F-box protein 1 from Arabidopsis thaliana (Mouse-ear cress).